Here is a 233-residue protein sequence, read N- to C-terminus: Octanoyltransferase (233 aa).

One can recognise a BPL/LPL catalytic domain in the interval 36–211; that stretch reads DTTPDEIWLV…EFTRQLGYPT (176 aa). Substrate is bound by residues 75-82, 142-144, and 155-157; these read RGGQVTYH, SLG, and GLA. The active-site Acyl-thioester intermediate is C173.

It belongs to the LipB family.

It is found in the cytoplasm. The catalysed reaction is octanoyl-[ACP] + L-lysyl-[protein] = N(6)-octanoyl-L-lysyl-[protein] + holo-[ACP] + H(+). Its pathway is protein modification; protein lipoylation via endogenous pathway; protein N(6)-(lipoyl)lysine from octanoyl-[acyl-carrier-protein]: step 1/2. Functionally, catalyzes the transfer of endogenously produced octanoic acid from octanoyl-acyl-carrier-protein onto the lipoyl domains of lipoate-dependent enzymes. Lipoyl-ACP can also act as a substrate although octanoyl-ACP is likely to be the physiological substrate. The sequence is that of Octanoyltransferase from Yersinia pestis bv. Antiqua (strain Antiqua).